The sequence spans 749 residues: MSESNNMHVSGDGAKQSVYTEKKRVKVYVLENNEWKDTGTGFCQGTVEERTIDDTQTAEKMAYLLVVDEDSDDQVLLKSRLEQNIEYQRQEETLIVWKDLNGQDIALSFEESIGCDSLCEYICFVQKNIESRISLVAVRSTDDGIGSVHEIITGPVNLPSNVPNQTEESLLEALKILNENTSFDYLRNETIQFVINDHYLATLIRSFYQSEESKLYRNLLLLSNIVKTLILFNSKEILEEMINDENFLCVCGILEYDTEFPNSKLNHRQYLKDKEPNFKEMIPISDPTIKLMITQNFRLQFLKDVVLVRFLDDQSFTFISDLMLSYQNSIIDFLQEDSNNFINQVISMYKVEEDSTVTPDKRRDGIKLLHECIQLSQNLNSIEKTLFYKFLIKKGLFQVIQFAFNMETNNDIRILATDIVVGLIEHDIQLIQSVQSDEVTLLNDENSDIDSTDMSLLLILTKILLTDKSPGLKEQSFQALVSLLDPEDYIVDDYQNHDDNIDTRIDNMLQIQNGKNHDGLDGERNHEKFQLAEYLQCFYRQVAPSLFHCFIDGSVNLYECDQQLLIKLVKLLNLMIQGHEASISRRFILENGILIRLISLASSDYILQLRLAAVRCFKNIVFLNDDFYLRYLIGKNLFDPIFEVFKENLNEDNMANSTILDFLKSLNTQLKVVEQEDIPLSGSKSSRNFMLLNKYICGRYGDILLKADYVSFTREMMAIYHEETQKLASLSTTETSFDENDNTTLEVEV.

Regulatory subunit 3 (R3) of the histone H2A phosphatase complex (HTP-C) consisting of PPH3, PSY2 and PSY4.

The protein localises to the nucleus. Its function is as follows. Core regulatory subunit of the histone H2A phosphatase complex, which dephosphorylates H2AS128ph (gamma-H2A) that has been displaced from sites of DNA lesions in the double-stranded DNA break repair process. Dephosphorylation is necessary for efficient recovery from the DNA damage checkpoint. The chain is Serine/threonine-protein phosphatase 4 regulatory subunit 3 (PSY2) from Kluyveromyces lactis (strain ATCC 8585 / CBS 2359 / DSM 70799 / NBRC 1267 / NRRL Y-1140 / WM37) (Yeast).